The sequence spans 138 residues: Large ribosomal subunit protein uL16 (138 aa).

It belongs to the universal ribosomal protein uL16 family. In terms of assembly, part of the 50S ribosomal subunit.

In terms of biological role, binds 23S rRNA and is also seen to make contacts with the A and possibly P site tRNAs. In Hyphomonas neptunium (strain ATCC 15444), this protein is Large ribosomal subunit protein uL16.